A 267-amino-acid polypeptide reads, in one-letter code: Putative ankyrin repeat protein RF_1099 (267 aa).

4 ANK repeats span residues aspartate 46–glutamine 75, leucine 78–leucine 107, aspartate 136–valine 165, and threonine 170–isoleucine 199. Positions lysine 238–serine 265 form a coiled coil.

This Rickettsia felis (strain ATCC VR-1525 / URRWXCal2) (Rickettsia azadi) protein is Putative ankyrin repeat protein RF_1099.